The primary structure comprises 381 residues: Homoserine O-succinyltransferase (381 aa).

An AB hydrolase-1 domain is found at 45–360 (NAVLVCHALN…PHGHDAFLLD (316 aa)). Residue serine 151 is the Nucleophile of the active site. Substrate is bound at residue arginine 221. Catalysis depends on residues aspartate 321 and histidine 354. Aspartate 355 contacts substrate.

Belongs to the AB hydrolase superfamily. MetX family. As to quaternary structure, homodimer.

It is found in the cytoplasm. It carries out the reaction L-homoserine + succinyl-CoA = O-succinyl-L-homoserine + CoA. Its pathway is amino-acid biosynthesis; L-methionine biosynthesis via de novo pathway; O-succinyl-L-homoserine from L-homoserine: step 1/1. Its function is as follows. Transfers a succinyl group from succinyl-CoA to L-homoserine, forming succinyl-L-homoserine. The protein is Homoserine O-succinyltransferase of Paraburkholderia phytofirmans (strain DSM 17436 / LMG 22146 / PsJN) (Burkholderia phytofirmans).